Consider the following 205-residue polypeptide: Urease accessory protein UreG (205 aa).

A GTP-binding site is contributed by 10–17; the sequence is GPVGSGKT.

Belongs to the SIMIBI class G3E GTPase family. UreG subfamily. As to quaternary structure, homodimer. UreD, UreF and UreG form a complex that acts as a GTP-hydrolysis-dependent molecular chaperone, activating the urease apoprotein by helping to assemble the nickel containing metallocenter of UreC. The UreE protein probably delivers the nickel.

It is found in the cytoplasm. Its function is as follows. Facilitates the functional incorporation of the urease nickel metallocenter. This process requires GTP hydrolysis, probably effectuated by UreG. The protein is Urease accessory protein UreG of Corynebacterium urealyticum (strain ATCC 43042 / DSM 7109).